The primary structure comprises 481 residues: MAASQLAALEGEELGAGEPALTKASPAVLYSEGQRLALEALLSSGEETFWACVQQERLPPFLSADEAQALATAAEDWLVPSQEPGAAGTGTAITDGDVGSLTYWPRQSEEPAPLLRLGWPEDTAWKGITRAQLYTQPPGEGQPPIKELVHQEIQAARKLVAVVMDVFTDPDLLRDMVDAATRRWIPVYLLLDHQHLPAFLALAQQLGVNLWTTENLDIRTVQGHTFQSRRRRQVSGHVREKFVLLDGDRVISGSYSFTWSDSRLHRSLVTLLTGEIADAFNQEFRVLYAASRPLSAAPARSPLFSPPEGPQLPRSPHRVALRCPVAPVAPLLSDGPLAQRLAACHILERDKQETPTTTGPALSDILRSVQRTRTTSGPPTRPSRSLWDLSRLSQLSGSSDGENESKKFWVSKDTPARALMRQRGTGGGPRAEMDSRSQPWGGPLPSIPARRLRYLSPAQRRLGDNATTSDWASGSGSGRRR.

Positions 1 to 296 (MAASQLAALE…LYAASRPLSA (296 aa)) are DUF1669. Residues 351-481 (KQETPTTTGP…ASGSGSGRRR (131 aa)) form a disordered region. A compositionally biased stretch (low complexity) spans 371–385 (RTRTTSGPPTRPSRS). 2 stretches are compositionally biased toward polar residues: residues 391 to 400 (RLSQLSGSSD) and 465 to 474 (NATTSDWASG).

It belongs to the FAM83 family. In terms of assembly, directly interacts (via DUF1669) with CSNK1A1, CSNK1A1L, CSNK1D and CSNK1E. May interact with RAF1.

The protein resides in the cytoplasm. Its subcellular location is the perinuclear region. In terms of biological role, may play a role in MAPK signaling. The protein is Protein FAM83E of Mus musculus (Mouse).